Here is a 526-residue protein sequence, read N- to C-terminus: Peptide chain release factor 3 (526 aa).

In terms of domain architecture, tr-type G spans 9–277 (DRRRTFAIVS…TFVDHAPAPL (269 aa)). GTP-binding positions include 18 to 25 (SHPDAGKT), 86 to 90 (DTPGH), and 140 to 143 (NKLD).

Belongs to the TRAFAC class translation factor GTPase superfamily. Classic translation factor GTPase family. PrfC subfamily.

It localises to the cytoplasm. Its function is as follows. Increases the formation of ribosomal termination complexes and stimulates activities of RF-1 and RF-2. It binds guanine nucleotides and has strong preference for UGA stop codons. It may interact directly with the ribosome. The stimulation of RF-1 and RF-2 is significantly reduced by GTP and GDP, but not by GMP. This Geobacter sulfurreducens (strain ATCC 51573 / DSM 12127 / PCA) protein is Peptide chain release factor 3.